A 625-amino-acid polypeptide reads, in one-letter code: MTIKKYTLLTALSVTAFSGWAQGNNTTDNNDEMVVTANRFPQPKSSVLAPVDVVTRADIDRWQSTNINDVLRRLPGVDIAQDGGMGQRSSLFIRGTNSSHVLVLIDGVRLNQAGITGASDLSQIPISLVQRIEYIRGPRSAVYGSDAIGGVINILTGRDKPGTTLSAGLGSNGYQTYDGSTQQKLGEDTTVTLAGNYTYSKGYDVVAGMPGAGGPRQPDRDGFMGKMLWAGLEHQFNEQFNGFARVYGFDNRSDYDGYTNYSNPLALIDTRKLSSRTYDTGLRYKNGIYASQFIASYNRTKDYNYSPLFGQHDITASLDEAEQYNLQWGNTFQLTNGMISAGADWQEQRTERKSSNQNTTADFTQHNTGIYLTGQQQISDVTLEGAVRSDDNSQFGWHSTWQTSAGWEFIDGYRLIGSYGTAYKAPNLMQLYSAYGGNANLKPEESKQWEGGVEGLTGPLTWRLSAYRNDIDQLIDYSNLTNGYFNINKATIKGVEWTGSFDTGPLSHQVTLEYLDPRNADTHEILVRRAKQQVKYQLDWQVADLDWSVTYQYLGQRYDKDYSTYPEETVELGGVSLWDLAVSYPVTSHLTVRGRIANLFDKDYEMVYGYQTPGREYYFTGSYNF.

A signal peptide spans Met-1–Ala-21. The TonB box signature appears at Asp-31–Asn-38. In terms of domain architecture, TBDR plug spans Pro-43–Gly-157. Residues Ser-90, Asn-97, and Ile-115–Thr-116 each bind cyanocob(III)alamin. The TBDR beta-barrel domain maps to Lys-160–Phe-625. Beta stranded transmembrane passes span Thr-163 to Gly-170, Tyr-174 to Gln-183, and Thr-189 to Ser-200. Residues Asp-204, Gln-217, Asp-219, and Asp-221 each contribute to the Ca(2+) site. The next 2 beta stranded transmembrane spans lie at Phe-223 to Glu-233 and Glu-238 to Asp-254. Ca(2+) is bound by residues Tyr-255, Asp-256, and Asp-269. Transmembrane regions (beta stranded) follow at residues Arg-271–Lys-285, Gly-287–Asn-304, Ser-317–Gln-333, Asn-336–Trp-345, Phe-363–Ser-379, Val-381–Asp-391, Phe-395–Ile-410, Tyr-413–Asn-427, Glu-445–Glu-454, Leu-460–Asn-469, Tyr-484–Phe-501, Pro-505–Ala-520, Arg-528–Trp-540, and Asp-546–Asp-561. Residue Ser-317 participates in cyanocob(III)alamin binding. Residue Arg-528 coordinates cyanocob(III)alamin. Tyr-562 provides a ligand contact to cyanocob(III)alamin. 3 beta stranded membrane passes run Thr-569 to Ser-583, Ile-596 to Val-607, and Pro-613 to Phe-625. Positions Tyr-608–Phe-625 match the TonB C-terminal box motif.

The protein belongs to the TonB-dependent receptor family. BtuB (TC 1.B.14.3.1) subfamily.

Its subcellular location is the cell outer membrane. Functionally, involved in the active translocation of vitamin B12 (cyanocobalamin) across the outer membrane to the periplasmic space. It derives its energy for transport by interacting with the trans-periplasmic membrane protein TonB. This chain is Vitamin B12 transporter BtuB, found in Yersinia pestis bv. Antiqua (strain Antiqua).